The primary structure comprises 316 residues: Thioredoxin reductase (316 aa).

Glu36–Gln43 provides a ligand contact to FAD. The cysteines at positions 135 and 138 are disulfide-linked. Residue Asp278–Ile287 participates in FAD binding.

The protein belongs to the class-II pyridine nucleotide-disulfide oxidoreductase family. Homodimer. Requires FAD as cofactor.

The protein resides in the cytoplasm. It catalyses the reaction [thioredoxin]-dithiol + NADP(+) = [thioredoxin]-disulfide + NADPH + H(+). The chain is Thioredoxin reductase (trxB) from Bacillus subtilis (strain 168).